The following is a 191-amino-acid chain: Decorin-binding protein A (191 aa).

An N-terminal signal peptide occupies residues 1–29 (MIKCNNKTFNNLLKLTILVNLLISCGLTG).

The protein belongs to the decorin-binding protein family.

In terms of biological role, binds to decorin which may mediate the adherence of B.burgdorferi to collagen fibers in skin and other tissues. This is Decorin-binding protein A (dbpA) from Borreliella burgdorferi (strain ATCC 35210 / DSM 4680 / CIP 102532 / B31) (Borrelia burgdorferi).